Here is a 185-residue protein sequence, read N- to C-terminus: Gastrokine-1 (185 aa).

Residues M1 to A20 form the signal peptide. A BRICHOS domain is found at N54–A150. C81 and C142 are oxidised to a cystine.

Belongs to the gastrokine family. Highly expressed specifically in surface cells of the antrum mucosa from where it is secreted.

Its subcellular location is the secreted. It localises to the cytoplasmic granule. The protein resides in the golgi apparatus. In terms of biological role, has mitogenic activity and may be involved in maintaining the integrity of the gastric mucosal epithelium. This is Gastrokine-1 (GKN1) from Sus scrofa (Pig).